The following is a 503-amino-acid chain: Probable cytosol aminopeptidase (503 aa).

Mn(2+) is bound by residues K270 and D275. The active site involves K282. The Mn(2+) site is built by D293, D352, and E354. R356 is an active-site residue.

Belongs to the peptidase M17 family. The cofactor is Mn(2+).

It localises to the cytoplasm. The catalysed reaction is Release of an N-terminal amino acid, Xaa-|-Yaa-, in which Xaa is preferably Leu, but may be other amino acids including Pro although not Arg or Lys, and Yaa may be Pro. Amino acid amides and methyl esters are also readily hydrolyzed, but rates on arylamides are exceedingly low.. It catalyses the reaction Release of an N-terminal amino acid, preferentially leucine, but not glutamic or aspartic acids.. Presumably involved in the processing and regular turnover of intracellular proteins. Catalyzes the removal of unsubstituted N-terminal amino acids from various peptides. In Citrobacter koseri (strain ATCC BAA-895 / CDC 4225-83 / SGSC4696), this protein is Probable cytosol aminopeptidase.